The primary structure comprises 125 residues: Phosphoribosyl-AMP cyclohydrolase (125 aa).

Residue D74 participates in Mg(2+) binding. A Zn(2+)-binding site is contributed by C75. The Mg(2+) site is built by D76 and D78. The Zn(2+) site is built by C92 and C99.

It belongs to the PRA-CH family. In terms of assembly, homodimer. The cofactor is Mg(2+). Requires Zn(2+) as cofactor.

The protein localises to the cytoplasm. The enzyme catalyses 1-(5-phospho-beta-D-ribosyl)-5'-AMP + H2O = 1-(5-phospho-beta-D-ribosyl)-5-[(5-phospho-beta-D-ribosylamino)methylideneamino]imidazole-4-carboxamide. Its pathway is amino-acid biosynthesis; L-histidine biosynthesis; L-histidine from 5-phospho-alpha-D-ribose 1-diphosphate: step 3/9. In terms of biological role, catalyzes the hydrolysis of the adenine ring of phosphoribosyl-AMP. The sequence is that of Phosphoribosyl-AMP cyclohydrolase from Citrifermentans bemidjiense (strain ATCC BAA-1014 / DSM 16622 / JCM 12645 / Bem) (Geobacter bemidjiensis).